A 173-amino-acid polypeptide reads, in one-letter code: MIVLNDRIIPWQPTVIAGPKQAMLVTPETATMMIKKARRPLMVVGPLAKRQEVLEHTVKIIRHFDLPVVATADTYRALSEAGIESEPHGIVEITNLLKDPSWEGIRGEGQHDLVIFIGCIYYIASQGLSSLKHFAPHIKTLTICKTFHSNADASFPNMDDDEWFRYLEKMYAE.

This sequence belongs to the CdhB family. As to quaternary structure, heterotetramer of two alpha and two epsilon subunits. The ACDS complex is made up of alpha, epsilon, beta, gamma and delta subunits with a probable stoichiometry of (alpha(2)epsilon(2))(4)-beta(8)-(gamma(1)delta(1))(8).

Its pathway is one-carbon metabolism; methanogenesis from acetate. In terms of biological role, part of a complex that catalyzes the reversible cleavage of acetyl-CoA, allowing growth on acetate as sole source of carbon and energy. The alpha-epsilon subcomponent functions as a carbon monoxide dehydrogenase. The precise role of the epsilon subunit is unclear; it may have a stabilizing role within the alpha(2)epsilon(2) component and/or be involved in electron transfer to FAD during a potential FAD-mediated CO oxidation. The polypeptide is Acetyl-CoA decarbonylase/synthase complex subunit epsilon (Methanothermobacter thermautotrophicus (strain ATCC 29096 / DSM 1053 / JCM 10044 / NBRC 100330 / Delta H) (Methanobacterium thermoautotrophicum)).